The following is a 280-amino-acid chain: Urease accessory protein UreD 3 (280 aa).

This sequence belongs to the UreD family. UreD, UreF and UreG form a complex that acts as a GTP-hydrolysis-dependent molecular chaperone, activating the urease apoprotein by helping to assemble the nickel containing metallocenter of UreC. The UreE protein probably delivers the nickel.

The protein resides in the cytoplasm. Its function is as follows. Required for maturation of urease via the functional incorporation of the urease nickel metallocenter. This chain is Urease accessory protein UreD 3, found in Bradyrhizobium sp. (strain ORS 278).